The following is a 433-amino-acid chain: Serine hydroxymethyltransferase (433 aa).

(6S)-5,6,7,8-tetrahydrofolate contacts are provided by residues L132 and G136–L138. The residue at position 241 (K241) is an N6-(pyridoxal phosphate)lysine.

It belongs to the SHMT family. As to quaternary structure, homodimer. The cofactor is pyridoxal 5'-phosphate.

The protein localises to the cytoplasm. It carries out the reaction (6R)-5,10-methylene-5,6,7,8-tetrahydrofolate + glycine + H2O = (6S)-5,6,7,8-tetrahydrofolate + L-serine. Its pathway is one-carbon metabolism; tetrahydrofolate interconversion. It participates in amino-acid biosynthesis; glycine biosynthesis; glycine from L-serine: step 1/1. Functionally, catalyzes the reversible interconversion of serine and glycine with tetrahydrofolate (THF) serving as the one-carbon carrier. This reaction serves as the major source of one-carbon groups required for the biosynthesis of purines, thymidylate, methionine, and other important biomolecules. Also exhibits THF-independent aldolase activity toward beta-hydroxyamino acids, producing glycine and aldehydes, via a retro-aldol mechanism. The protein is Serine hydroxymethyltransferase of Afipia carboxidovorans (strain ATCC 49405 / DSM 1227 / KCTC 32145 / OM5) (Oligotropha carboxidovorans).